The sequence spans 153 residues: 3-hydroxyacyl-[acyl-carrier-protein] dehydratase FabZ (153 aa).

Residue His-56 is part of the active site.

It belongs to the thioester dehydratase family. FabZ subfamily.

It localises to the cytoplasm. It catalyses the reaction a (3R)-hydroxyacyl-[ACP] = a (2E)-enoyl-[ACP] + H2O. Functionally, involved in unsaturated fatty acids biosynthesis. Catalyzes the dehydration of short chain beta-hydroxyacyl-ACPs and long chain saturated and unsaturated beta-hydroxyacyl-ACPs. The protein is 3-hydroxyacyl-[acyl-carrier-protein] dehydratase FabZ of Halorhodospira halophila (strain DSM 244 / SL1) (Ectothiorhodospira halophila (strain DSM 244 / SL1)).